A 357-amino-acid polypeptide reads, in one-letter code: Norreticuline-7-O-methyltransferase (357 aa).

Aspartate 225 is an S-adenosyl-L-methionine binding site. The Proton acceptor role is filled by histidine 263.

The protein belongs to the class I-like SAM-binding methyltransferase superfamily. Cation-independent O-methyltransferase family. In terms of tissue distribution, expressed instems, leaves, roots and seedlings.

Functionally, involved in the biosynthesis of benzylisoquinoline alkaloids. Catalyzes specifically the methylation of norreticuline at position seven to produce norlaudanine. No activity with norcoclaurine, reticuline, norlaudanosoline, norisoorientaline, scoulerine, salutaridinol, oripavine, salsolinol, codeine or morphine. Involved in papaverine biosynthesis. This Papaver somniferum (Opium poppy) protein is Norreticuline-7-O-methyltransferase.